The sequence spans 119 residues: Ribonuclease P protein component (119 aa).

The protein belongs to the RnpA family. In terms of assembly, consists of a catalytic RNA component (M1 or rnpB) and a protein subunit.

It catalyses the reaction Endonucleolytic cleavage of RNA, removing 5'-extranucleotides from tRNA precursor.. Its function is as follows. RNaseP catalyzes the removal of the 5'-leader sequence from pre-tRNA to produce the mature 5'-terminus. It can also cleave other RNA substrates such as 4.5S RNA. The protein component plays an auxiliary but essential role in vivo by binding to the 5'-leader sequence and broadening the substrate specificity of the ribozyme. The chain is Ribonuclease P protein component from Escherichia coli O157:H7.